A 139-amino-acid chain; its full sequence is D-ribose pyranase (139 aa).

His-20 acts as the Proton donor in catalysis. Residues Asp-28, His-106, and 128-130 (YAN) contribute to the substrate site.

Belongs to the RbsD / FucU family. RbsD subfamily. In terms of assembly, homodecamer.

The protein localises to the cytoplasm. The enzyme catalyses beta-D-ribopyranose = beta-D-ribofuranose. It participates in carbohydrate metabolism; D-ribose degradation; D-ribose 5-phosphate from beta-D-ribopyranose: step 1/2. Catalyzes the interconversion of beta-pyran and beta-furan forms of D-ribose. The polypeptide is D-ribose pyranase (Aeromonas hydrophila subsp. hydrophila (strain ATCC 7966 / DSM 30187 / BCRC 13018 / CCUG 14551 / JCM 1027 / KCTC 2358 / NCIMB 9240 / NCTC 8049)).